Reading from the N-terminus, the 348-residue chain is Eukaryotic translation initiation factor 3 subunit I (348 aa).

WD repeat units follow at residues 8-49 (GHER…GTFE), 51-91 (HMGT…YTYE), 93-135 (PTPV…PKNQ), 147-186 (DGAK…FIDS), 196-238 (EKIH…KVYK), and 294-333 (GHFG…YDFE).

The protein belongs to the eIF-3 subunit I family. Component of the eukaryotic translation initiation factor 3 (eIF-3) complex.

The protein resides in the cytoplasm. In terms of biological role, component of the eukaryotic translation initiation factor 3 (eIF-3) complex, which is involved in protein synthesis of a specialized repertoire of mRNAs and, together with other initiation factors, stimulates binding of mRNA and methionyl-tRNAi to the 40S ribosome. The eIF-3 complex specifically targets and initiates translation of a subset of mRNAs involved in cell proliferation. The polypeptide is Eukaryotic translation initiation factor 3 subunit I (Meyerozyma guilliermondii (strain ATCC 6260 / CBS 566 / DSM 6381 / JCM 1539 / NBRC 10279 / NRRL Y-324) (Yeast)).